A 669-amino-acid chain; its full sequence is GTP-binding protein 1 (669 aa).

The tract at residues 1–32 (MATERSRSAMDSPVPASMFAPEPSSPGAARAA) is disordered. Phosphoserine is present on residues Ser6, Ser8, Ser12, Ser24, Ser25, Ser44, Ser47, and Ser69. The region spanning 158–389 (FLEVRVAVVG…LNLLSPRTSY (232 aa)) is the tr-type G domain. The tract at residues 167–174 (GNVDAGKS) is G1. 167–174 (GNVDAGKS) provides a ligand contact to GTP. The interval 206–210 (GRTSS) is G2. Residues 252–255 (DLAG) are G3. GTP is bound by residues 252-256 (DLAGH) and 308-311 (TKID). The tract at residues 308–311 (TKID) is G4. The G5 stretch occupies residues 366–368 (SNV). Residues 573–595 (LLQTTNNSPMNSKPQQIKMQSTK) show a composition bias toward polar residues. The tract at residues 573–669 (LLQTTNNSPM…GACVTPASGC (97 aa)) is disordered. Ser580 carries the post-translational modification Phosphoserine. Residues 646–657 (GRRRGGQRHKVK) show a composition bias toward basic residues.

The protein belongs to the TRAFAC class translation factor GTPase superfamily. Classic translation factor GTPase family. GTPBP1 subfamily. In terms of assembly, interacts with EXOSC2/RRP4, EXOSC3/RRP40, EXOSC5/RRP46, HNRNPD, HNRNPR and SYNCRIP. Identified in a complex with AANAT mRNA, but does not bind mRNA by itself.

It is found in the cytoplasm. In terms of biological role, promotes degradation of target mRNA species. Plays a role in the regulation of circadian mRNA stability. Binds GTP and has GTPase activity. This Homo sapiens (Human) protein is GTP-binding protein 1 (GTPBP1).